The following is a 247-amino-acid chain: ATP synthase subunit a, chloroplastic (247 aa).

The next 5 membrane-spanning stretches (helical) occupy residues 38-58, 95-115, 134-154, 199-219, and 220-240; these read QVLITSWVVIAILLGSAAIAV, VPFIGTMFLFIFVSNWSGALL, INTTVALALLTSAAYFYAGLT, LVVVVLVSLVPLVVPIPVMFL, and GLFTSGIQALIFATLAAAYIG.

The protein belongs to the ATPase A chain family. As to quaternary structure, F-type ATPases have 2 components, CF(1) - the catalytic core - and CF(0) - the membrane proton channel. CF(1) has five subunits: alpha(3), beta(3), gamma(1), delta(1), epsilon(1). CF(0) has four main subunits: a, b, b' and c.

The protein resides in the plastid. The protein localises to the chloroplast thylakoid membrane. Key component of the proton channel; it plays a direct role in the translocation of protons across the membrane. The chain is ATP synthase subunit a, chloroplastic from Ceratophyllum demersum (Rigid hornwort).